The sequence spans 610 residues: Zinc metalloproteinase-disintegrin-like BITM06A (610 aa).

Positions 1 to 20 (MIQVLLVTICLAAFPYQGSS) are cleaved as a signal peptide. Residues 21 to 189 (IILESGNVND…KKASQLVVTA (169 aa)) constitute a propeptide that is removed on maturation. Residues 198–394 (RYVELFIVVD…ENPQCILNEP (197 aa)) enclose the Peptidase M12B domain. Glu-201 and Asp-285 together coordinate Ca(2+). 3 cysteine pairs are disulfide-bonded: Cys-309/Cys-389, Cys-349/Cys-373, and Cys-351/Cys-356. Residue His-334 coordinates Zn(2+). Glu-335 is a catalytic residue. Zn(2+) is bound by residues His-338 and His-344. An N-linked (GlcNAc...) asparagine glycan is attached at Asn-372. Ca(2+) is bound by residues Cys-389, Asn-392, Val-404, Asn-407, Leu-409, Glu-411, Glu-414, and Asp-417. Residues 402 to 488 (PPVCGNELLE…ECPADVFHKN (87 aa)) form the Disintegrin domain. 14 disulfide bridges follow: Cys-405–Cys-434, Cys-416–Cys-429, Cys-418–Cys-424, Cys-428–Cys-451, Cys-442–Cys-448, Cys-447–Cys-473, Cys-460–Cys-480, Cys-467–Cys-499, Cys-492–Cys-504, Cys-511–Cys-561, Cys-526–Cys-572, Cys-539–Cys-549, Cys-556–Cys-598, and Cys-592–Cys-603. A D/ECD-tripeptide motif is present at residues 466–468 (ECD). The Ca(2+) site is built by Asp-468, Pro-469, Glu-471, Asp-483, and Val-484.

Belongs to the venom metalloproteinase (M12B) family. P-III subfamily. P-IIIa sub-subfamily. In terms of assembly, monomer. Requires Zn(2+) as cofactor. In terms of tissue distribution, expressed by the venom gland.

The protein resides in the secreted. Snake venom metalloproteinase that impairs hemostasis in the envenomed animal. The sequence is that of Zinc metalloproteinase-disintegrin-like BITM06A from Bothrops insularis (Golden lancehead).